Consider the following 210-residue polypeptide: Cdc42 effector protein 2 (210 aa).

S2 is subject to N-acetylserine. The region spanning 30–44 (ISPPLGDFRHTIHIG) is the CRIB domain. 3 positions are modified to phosphoserine: S31, S101, and S141. Positions 124-145 (AQAPPKPPRLHLETPQASPQEA) are disordered.

Belongs to the BORG/CEP family. In terms of assembly, interacts with CDC42 and RHOQ, in a GTP-dependent manner, and with SEPT7.

It is found in the endomembrane system. The protein localises to the cytoplasm. Its subcellular location is the cytoskeleton. In terms of biological role, probably involved in the organization of the actin cytoskeleton. May act downstream of CDC42 to induce actin filament assembly leading to cell shape changes. Induces pseudopodia formation in fibroblasts in a CDC42-dependent manner. The sequence is that of Cdc42 effector protein 2 (CDC42EP2) from Bos taurus (Bovine).